The following is a 298-amino-acid chain: Inosose dehydratase (298 aa).

The protein belongs to the IolE/MocC family. Glutathione is required as a cofactor. It depends on Co(2+) as a cofactor. The cofactor is Mn(2+).

The enzyme catalyses scyllo-inosose = 3D-3,5/4-trihydroxycyclohexane-1,2-dione + H2O. Functionally, catalyzes the dehydration of inosose (2-keto-myo-inositol, 2KMI or 2,4,6/3,5-pentahydroxycyclohexanone) to 3D-(3,5/4)-trihydroxycyclohexane-1,2-dione (D-2,3-diketo-4-deoxy-epi-inositol). The protein is Inosose dehydratase of Glaesserella parasuis serovar 5 (strain SH0165) (Haemophilus parasuis).